Consider the following 162-residue polypeptide: SsrA-binding protein (162 aa).

Positions 137–154 (HDKREDTKAREWDREKAR) are enriched in basic and acidic residues. Positions 137–162 (HDKREDTKAREWDREKARIMKNKHRG) are disordered.

The protein belongs to the SmpB family.

The protein resides in the cytoplasm. Required for rescue of stalled ribosomes mediated by trans-translation. Binds to transfer-messenger RNA (tmRNA), required for stable association of tmRNA with ribosomes. tmRNA and SmpB together mimic tRNA shape, replacing the anticodon stem-loop with SmpB. tmRNA is encoded by the ssrA gene; the 2 termini fold to resemble tRNA(Ala) and it encodes a 'tag peptide', a short internal open reading frame. During trans-translation Ala-aminoacylated tmRNA acts like a tRNA, entering the A-site of stalled ribosomes, displacing the stalled mRNA. The ribosome then switches to translate the ORF on the tmRNA; the nascent peptide is terminated with the 'tag peptide' encoded by the tmRNA and targeted for degradation. The ribosome is freed to recommence translation, which seems to be the essential function of trans-translation. This Aeromonas hydrophila subsp. hydrophila (strain ATCC 7966 / DSM 30187 / BCRC 13018 / CCUG 14551 / JCM 1027 / KCTC 2358 / NCIMB 9240 / NCTC 8049) protein is SsrA-binding protein.